The sequence spans 589 residues: Aspartate--tRNA ligase (589 aa).

Position 175 (Glu-175) interacts with L-aspartate. The segment at 199–202 (QIFK) is aspartate. Arg-221 contacts L-aspartate. ATP-binding positions include 221–223 (RDE) and Gln-230. An L-aspartate-binding site is contributed by His-449. Glu-483 serves as a coordination point for ATP. Arg-490 provides a ligand contact to L-aspartate. An ATP-binding site is contributed by 535 to 538 (GLDR).

Belongs to the class-II aminoacyl-tRNA synthetase family. Type 1 subfamily. As to quaternary structure, homodimer.

Its subcellular location is the cytoplasm. It carries out the reaction tRNA(Asp) + L-aspartate + ATP = L-aspartyl-tRNA(Asp) + AMP + diphosphate. Its function is as follows. Catalyzes the attachment of L-aspartate to tRNA(Asp) in a two-step reaction: L-aspartate is first activated by ATP to form Asp-AMP and then transferred to the acceptor end of tRNA(Asp). The chain is Aspartate--tRNA ligase from Shouchella clausii (strain KSM-K16) (Alkalihalobacillus clausii).